Consider the following 455-residue polypeptide: Ribosomal protein uS12 methylthiotransferase RimO (455 aa).

The region spanning 30–140 is the MTTase N-terminal domain; the sequence is PTIGMVSLGC…VLDAVHGAVP (111 aa). C39, C75, C104, C171, C175, and C178 together coordinate [4Fe-4S] cluster. Residues 157–386 form the Radical SAM core domain; the sequence is LTPRHFSYLK…MEKAQAISEA (230 aa). Residues 389 to 455 form the TRAM domain; that stretch reads AAKVGRRIEV…GEYDLWGRPV (67 aa).

It belongs to the methylthiotransferase family. RimO subfamily. It depends on [4Fe-4S] cluster as a cofactor.

It localises to the cytoplasm. The catalysed reaction is L-aspartate(89)-[ribosomal protein uS12]-hydrogen + (sulfur carrier)-SH + AH2 + 2 S-adenosyl-L-methionine = 3-methylsulfanyl-L-aspartate(89)-[ribosomal protein uS12]-hydrogen + (sulfur carrier)-H + 5'-deoxyadenosine + L-methionine + A + S-adenosyl-L-homocysteine + 2 H(+). Catalyzes the methylthiolation of an aspartic acid residue of ribosomal protein uS12. This chain is Ribosomal protein uS12 methylthiotransferase RimO, found in Cereibacter sphaeroides (strain ATCC 17029 / ATH 2.4.9) (Rhodobacter sphaeroides).